We begin with the raw amino-acid sequence, 132 residues long: Small ribosomal subunit protein uS8c (132 aa).

This sequence belongs to the universal ribosomal protein uS8 family. As to quaternary structure, part of the 30S ribosomal subunit.

The protein localises to the plastid. The protein resides in the chloroplast. In terms of biological role, one of the primary rRNA binding proteins, it binds directly to 16S rRNA central domain where it helps coordinate assembly of the platform of the 30S subunit. The protein is Small ribosomal subunit protein uS8c (rps8) of Platanus occidentalis (Sycamore).